Consider the following 178-residue polypeptide: MIITIGGLPGTGTTTIAKLISEKYNLNHVCAGFIFRDMAKEMGMGLQEFSKYAEENPNIDHEIDRKQVELAKEGNIVLEGRLATWMLKKNSVEPTISIWLRAPSMVRCERISERECEDINTALNKMINRENSEKKRYKELYDINIDDLSIYDIIINSSAWNIEGVFSIIDRAIANKSK.

Residue 7 to 15 coordinates ATP; sequence GLPGTGTTT.

Belongs to the cytidylate kinase family. Type 2 subfamily.

It localises to the cytoplasm. It carries out the reaction CMP + ATP = CDP + ADP. It catalyses the reaction dCMP + ATP = dCDP + ADP. The chain is Cytidylate kinase from Methanococcus aeolicus (strain ATCC BAA-1280 / DSM 17508 / OCM 812 / Nankai-3).